The chain runs to 419 residues: MDNQIIQETVDKILSVLPNQAGQLARLVRLMQFACDPTITVIGKYNHGKSRLLNELIGTDIFSVADKRETIQLAEHKQDQVRWLDAPGLDADVAAVDDRHAFEAVWTQADIRLFVHSVREGELDATEHHLLQQLIEDADHSRRQTILVLTQIDQIPDQTILTQIKTSIAQQVPKLDIWAVSATRHRQGIENGKTLLIEKSGIGALRHTLEQALAQVPSARTYEKNRLLSDLHHQLKQLLLDQKHVLQQLQQTQQQQLHDFDTGLINILDKIRVDLEPIVNIDGQDQALNPDSFATMFKNTAAKQQRAKVQIAYSRACIEINSHLIRHGVVGLPAEQQTTIKSIDTVIVAVFGISVKFRDQLRALFYTDTERQRLQREFRFYFEKSAGRMILAAKIEQTMRQQGCIQNAMMALQQMESAA.

This is an uncharacterized protein from Acinetobacter baylyi (strain ATCC 33305 / BD413 / ADP1).